The chain runs to 315 residues: 2-oxoglutarate and iron-dependent oxygenase domain-containing protein 3 (315 aa).

The tract at residues 1 to 31 (MAPQRRGPPRIPEGSSAAERRRATSTKKDRL) is disordered. At 1-41 (MAPQRRGPPRIPEGSSAAERRRATSTKKDRLPREAQRTWLR) the chain is on the cytoplasmic side. The span at 18–31 (AERRRATSTKKDRL) shows a compositional bias: basic and acidic residues. A helical; Signal-anchor for type II membrane protein transmembrane segment spans residues 42–62 (IVAFGVGLALVTCLLWSSVGI). Over 63–315 (DDDVAEVVAR…DHGIEDPVLT (253 aa)) the chain is Lumenal. A Fe2OG dioxygenase domain is found at 203–305 (KPTFFSRINS…AITIAFTCNP (103 aa)). A glycan (N-linked (GlcNAc...) asparagine) is linked at Asn211. Positions 226 and 228 each coordinate Fe cation. Asn263 carries an N-linked (GlcNAc...) asparagine glycan. Fe cation is bound at residue His284. The active site involves Arg294. Arg294 is a binding site for 2-oxoglutarate.

Belongs to the OGFOD3 family. The cofactor is Fe(2+). L-ascorbate serves as cofactor.

The protein localises to the membrane. The protein is 2-oxoglutarate and iron-dependent oxygenase domain-containing protein 3 (Ogfod3) of Mus musculus (Mouse).